Here is a 158-residue protein sequence, read N- to C-terminus: Mitotic-spindle organizing protein 2B (158 aa).

The residue at position 34 (Ser-34) is a Phosphoserine. The tract at residues 84–158 is disordered; that stretch reads RLASEPQDPA…PGKSPTRGST (75 aa). A compositionally biased stretch (low complexity) spans 111-122; it reads GSAALGGALALA. Positions 128–140 are enriched in polar residues; it reads EGSSQRMPRQPSA. Ser-152 carries the post-translational modification Phosphoserine.

The protein belongs to the MOZART2 family. In terms of assembly, associates with the gamma-tubulin ring complex (gTuRC) consisting of TUBGCP2, TUBGCP3, TUBGCP4, TUBGCP5 and TUBGCP6 and gamma-tubulin TUBG1 or TUBG2; within the complex, interacts with TUBGCP2; the interaction plays a role in gTuRC activation. Interacts with TUBG1.

The protein resides in the cytoplasm. It localises to the cytoskeleton. It is found in the microtubule organizing center. The protein localises to the centrosome. Its subcellular location is the spindle. Functionally, required for the recruitment and the assembly of the gamma-tubulin ring complex (gTuRC) at the centrosome. The gTuRC regulates the minus-end nucleation of alpha-beta tubulin heterodimers that grow into microtubule protafilaments, a critical step in centrosome duplication and spindle formation. This is Mitotic-spindle organizing protein 2B (MZT2B) from Homo sapiens (Human).